The following is a 265-amino-acid chain: MLLTIDVGNTHTVLGLFDGEDIVEHWRISTDSRRTADELAVLLQGLMGMHPLLGDELGDGIDGIAICATVPSVLHELREVTRRYYGDVPAVLVEPGVKTGVPILTDHPKEVGADRIINAVAAVELYGGPAIVVDFGTATTFDAVSARGEYIGGVIAPGIEISVEALGVKGAQLRKIEVARPRSVIGKNTVEAMQSGIVYGFAGQVDGVVNRMARELADDPDDVTVIATGGLAPMVLGESSVIDEHEPWLTLMGLRLVYERNVSRM.

Position 6-13 (6-13 (DVGNTHTV)) interacts with ATP. 112–115 (GADR) is a substrate binding site. Asp114 (proton acceptor) is an active-site residue. A K(+)-binding site is contributed by Asp134. Thr137 provides a ligand contact to ATP. Residue Thr189 coordinates substrate.

The protein belongs to the type III pantothenate kinase family. As to quaternary structure, homodimer. Requires NH4(+) as cofactor. K(+) serves as cofactor.

The protein resides in the cytoplasm. The enzyme catalyses (R)-pantothenate + ATP = (R)-4'-phosphopantothenate + ADP + H(+). Its pathway is cofactor biosynthesis; coenzyme A biosynthesis; CoA from (R)-pantothenate: step 1/5. Functionally, catalyzes the phosphorylation of pantothenate (Pan), the first step in CoA biosynthesis. This Streptomyces coelicolor (strain ATCC BAA-471 / A3(2) / M145) protein is Type III pantothenate kinase.